The chain runs to 525 residues: GMP synthase [glutamine-hydrolyzing] (525 aa).

Residues 9–207 form the Glutamine amidotransferase type-1 domain; that stretch reads RILILDFGSQ…VQDICGCEAL (199 aa). Cys-86 acts as the Nucleophile in catalysis. Residues His-181 and Glu-183 contribute to the active site. The region spanning 208–400 is the GMPS ATP-PPase domain; it reads WTASNIVEDA…LGLPYDMVYR (193 aa). 235–241 provides a ligand contact to ATP; that stretch reads SGGVDSS.

As to quaternary structure, homodimer.

The catalysed reaction is XMP + L-glutamine + ATP + H2O = GMP + L-glutamate + AMP + diphosphate + 2 H(+). The protein operates within purine metabolism; GMP biosynthesis; GMP from XMP (L-Gln route): step 1/1. Its function is as follows. Catalyzes the synthesis of GMP from XMP. In Pseudomonas putida (strain GB-1), this protein is GMP synthase [glutamine-hydrolyzing].